The sequence spans 186 residues: Calcium load-activated calcium channel homolog (186 aa).

Topologically, residues 1–6 are cytoplasmic; sequence MLGDCL. Residues 7 to 27 form a helical membrane-spanning segment; the sequence is LIIAIAFGTALAGEGITWLLV. The Lumenal portion of the chain corresponds to 28–87; it reads YRSDHYKRLKADMDKKTKKLEKKKQEVGDTNDKNIKRKLEREEERLKATNRDMSMFKMKS. A coiled-coil region spans residues 30 to 86; that stretch reads SDHYKRLKADMDKKTKKLEKKKQEVGDTNDKNIKRKLEREEERLKATNRDMSMFKMK. A helical membrane pass occupies residues 88–108; sequence MFAIGLAFTALLSTFNSIFEG. At 109–134 the chain is on the cytoplasmic side; the sequence is RVVAKLPFYPIGFIQGLSHRNLIGED. Positions 135–151 form an intramembrane region, pore-forming; sequence MTDCSFIFLYILCTMTV. At 152-186 the chain is on the cytoplasmic side; it reads RQNLQKILGFAPSRAMARQQSSPWAPPNSQMNYLR.

Belongs to the TMCO1 family. As to quaternary structure, homodimer and homotetramer.

It is found in the endoplasmic reticulum membrane. Calcium-selective channel required to prevent calcium stores from overfilling. In Caenorhabditis elegans, this protein is Calcium load-activated calcium channel homolog.